The chain runs to 384 residues: UDP-galactopyranose mutase (384 aa).

The N-terminal stretch at 1-23 (MKSKKILIVGAGFSGAVIGRQLA) is a signal peptide. Residues S14, 33 to 34 (DQ), N41, and 60 to 61 (HI) each bind FAD. 5 residues coordinate UDP-alpha-D-galactose: N84, F151, T156, W160, and Y185. F219 provides a ligand contact to FAD. The UDP-alpha-D-galactose site is built by N270, R280, and Y314. Residue R343 coordinates FAD. Y349 provides a ligand contact to UDP-alpha-D-galactose. FAD is bound at residue 350–355 (LDMDVT).

The protein belongs to the UDP-galactopyranose/dTDP-fucopyranose mutase family. Homodimer. FAD is required as a cofactor.

It carries out the reaction UDP-alpha-D-galactose = UDP-alpha-D-galactofuranose. It participates in bacterial outer membrane biogenesis; LPS O-antigen biosynthesis. In terms of biological role, involved in the biosynthesis of the galactose-containing O-side-chain polysaccharide backbone structure of D-galactan I which is a key component of lipopolysaccharide (LPS). Catalyzes the interconversion through a 2-keto intermediate of uridine diphosphogalactopyranose (UDP-GalP) into uridine diphosphogalactofuranose (UDP-GalF) which is the biosynthetic precursor of galactofuranosyl residues. This chain is UDP-galactopyranose mutase (rfbD), found in Klebsiella pneumoniae.